Consider the following 351-residue polypeptide: Histidinol-phosphate aminotransferase 1 (351 aa).

N6-(pyridoxal phosphate)lysine is present on lysine 210.

This sequence belongs to the class-II pyridoxal-phosphate-dependent aminotransferase family. Histidinol-phosphate aminotransferase subfamily. As to quaternary structure, homodimer. The cofactor is pyridoxal 5'-phosphate.

The enzyme catalyses L-histidinol phosphate + 2-oxoglutarate = 3-(imidazol-4-yl)-2-oxopropyl phosphate + L-glutamate. Its pathway is amino-acid biosynthesis; L-histidine biosynthesis; L-histidine from 5-phospho-alpha-D-ribose 1-diphosphate: step 7/9. The protein is Histidinol-phosphate aminotransferase 1 (hisC1) of Pseudomonas aeruginosa (strain ATCC 15692 / DSM 22644 / CIP 104116 / JCM 14847 / LMG 12228 / 1C / PRS 101 / PAO1).